A 513-amino-acid polypeptide reads, in one-letter code: Na(+)/H(+) antiporter NhaB (513 aa).

Helical transmembrane passes span 21–41 (ICIIAFLVINPLIYFFISPFV), 88–108 (IMANFEVILLLMFMVAGIYFM), 119–139 (LLIVIHSKKILSLAFCLSATF), 243–263 (LPVSLPVLICGVITCLLLEHF), 299–318 (MGIQALAGIWLVVGLALHLA), 322–344 (IIGLTIIIICTAFCGITDEHAIG), 350–370 (PMPFTALIVVFFTVVAVIVDL), 389–409 (LALFYVFNGLLSMISDNVFVG), and 477–497 (MALPYTIVLSIIGFLSLEFLL).

Belongs to the NhaB Na(+)/H(+) (TC 2.A.34) antiporter family.

Its subcellular location is the cell inner membrane. It catalyses the reaction 2 Na(+)(in) + 3 H(+)(out) = 2 Na(+)(out) + 3 H(+)(in). Its function is as follows. Na(+)/H(+) antiporter that extrudes sodium in exchange for external protons. The protein is Na(+)/H(+) antiporter NhaB of Actinobacillus pleuropneumoniae serotype 5b (strain L20).